The following is an 822-amino-acid chain: Valine--tRNA ligase (822 aa).

A 'HIGH' region motif is present at residues Pro-41–His-51. The 'KMSKS' region signature appears at Lys-511–Ser-515. An ATP-binding site is contributed by Lys-514. Positions Glu-765 to Lys-822 form a coiled coil.

It belongs to the class-I aminoacyl-tRNA synthetase family. ValS type 1 subfamily. Monomer.

Its subcellular location is the cytoplasm. It carries out the reaction tRNA(Val) + L-valine + ATP = L-valyl-tRNA(Val) + AMP + diphosphate. Catalyzes the attachment of valine to tRNA(Val). As ValRS can inadvertently accommodate and process structurally similar amino acids such as threonine, to avoid such errors, it has a 'posttransfer' editing activity that hydrolyzes mischarged Thr-tRNA(Val) in a tRNA-dependent manner. This is Valine--tRNA ligase from Mesomycoplasma hyopneumoniae (strain J / ATCC 25934 / NCTC 10110) (Mycoplasma hyopneumoniae).